The sequence spans 404 residues: Phosphoribulokinase, chloroplastic (404 aa).

The N-terminal 53 residues, M1–C53, are a transit peptide targeting the chloroplast. An intrachain disulfide couples C69 to C108.

This sequence belongs to the phosphoribulokinase family.

The protein resides in the plastid. It localises to the chloroplast. The enzyme catalyses D-ribulose 5-phosphate + ATP = D-ribulose 1,5-bisphosphate + ADP + H(+). The protein operates within carbohydrate biosynthesis; Calvin cycle. Light regulated via thioredoxin by reversible oxidation/reduction of sulfhydryl/disulfide groups. In Triticum aestivum (Wheat), this protein is Phosphoribulokinase, chloroplastic.